We begin with the raw amino-acid sequence, 381 residues long: MKAVHFGAGNIGRGFIGLQLVKSGYDVCFIDVNAEVVEALKTRGAYTVGYAAEEAAVEEVSRVTALNSQTEAERVVEAIATADVVTTAVGPTLLARIAPLLAEGLKQRTTTQNVFVIACENMIEGSSHLQQEVMHYLESTPGNVFFPNAAVDRIVPLQHHEDPLYVEVEPFFEWVIETKALPDDYPVFEGVTYVADITPFIERKLFTVNTGHAIASYLGALFGKETIAESLQDVRVRRGVQSALYETGWLLLEKYGFDPKDHSAYIQKNIKRFENPRIHDEIVRVARSPIRKLGPRDRLVKPARELMDRGIEANGLALGIAAALTYSDPNYSEYSELNTFIEQNGIQETVATYLGLEADERLSQLIVSQYEQMHPMSDSIA.

3–14 (AVHFGAGNIGRG) lines the NAD(+) pocket.

The protein belongs to the mannitol dehydrogenase family.

The catalysed reaction is D-mannitol 1-phosphate + NAD(+) = beta-D-fructose 6-phosphate + NADH + H(+). The protein is Mannitol-1-phosphate 5-dehydrogenase of Exiguobacterium sibiricum (strain DSM 17290 / CCUG 55495 / CIP 109462 / JCM 13490 / 255-15).